A 199-amino-acid polypeptide reads, in one-letter code: Charged multivesicular body protein 1b (199 aa).

Coiled-coil stretches lie at residues 10–48 and 178–199; these read NLKFAAKELNRNSKRCDKEEKAEKAKIKKAIQKGNMEVA and TSVASAEQDELSQRLARLRDQV. Residues 167–199 are disordered; that stretch reads ELPQGQTGSVGTSVASAEQDELSQRLARLRDQV. Polar residues predominate over residues 170–182; it reads QGQTGSVGTSVAS. Positions 186 to 196 match the MIT-interacting motif motif; sequence DELSQRLARLR.

This sequence belongs to the SNF7 family. Probable peripherally associated component of the endosomal sorting required for transport complex III (ESCRT-III).

It is found in the cytoplasm. The protein resides in the cytosol. The protein localises to the endosome. It localises to the late endosome membrane. Its function is as follows. Probable peripherally associated component of the endosomal sorting required for transport complex III (ESCRT-III) which is involved in multivesicular bodies (MVBs) formation and sorting of endosomal cargo proteins into MVBs. MVBs contain intraluminal vesicles (ILVs) that are generated by invagination and scission from the limiting membrane of the endosome and mostly are delivered to lysosomes enabling degradation of membrane proteins, such as stimulated growth factor receptors, lysosomal enzymes and lipids. In Gallus gallus (Chicken), this protein is Charged multivesicular body protein 1b (CHMP1B).